The chain runs to 177 residues: dCTP deaminase, dUMP-forming (177 aa).

DCTP contacts are provided by residues 98–103 (RSSVGR), Asn110, 115–118 (DPGF), 123–125 (TLE), Gln144, 157–160 (YQGK), and Gln164. Glu125 acts as the Proton donor/acceptor in catalysis.

Belongs to the dCTP deaminase family. Homotrimer. The cofactor is Mg(2+).

It catalyses the reaction dCTP + 2 H2O = dUMP + NH4(+) + diphosphate. It functions in the pathway pyrimidine metabolism; dUMP biosynthesis; dUMP from dCTP: step 1/1. Its activity is regulated as follows. Inhibited by dTTP. Functionally, bifunctional enzyme that catalyzes both the deamination of dCTP to dUTP and the hydrolysis of dUTP to dUMP without releasing the toxic dUTP intermediate. This chain is dCTP deaminase, dUMP-forming, found in Halalkalibacterium halodurans (strain ATCC BAA-125 / DSM 18197 / FERM 7344 / JCM 9153 / C-125) (Bacillus halodurans).